We begin with the raw amino-acid sequence, 306 residues long: Ribonuclease HIII (306 aa).

The RNase H type-2 domain occupies 87-302 (WSVVGSDEVG…TKKAEALAKK (216 aa)). 3 residues coordinate a divalent metal cation: Asp93, Glu94, and Asp196.

This sequence belongs to the RNase HII family. RnhC subfamily. Mn(2+) is required as a cofactor. Mg(2+) serves as cofactor.

It localises to the cytoplasm. It catalyses the reaction Endonucleolytic cleavage to 5'-phosphomonoester.. Its function is as follows. Endonuclease that specifically degrades the RNA of RNA-DNA hybrids. The chain is Ribonuclease HIII from Exiguobacterium sibiricum (strain DSM 17290 / CCUG 55495 / CIP 109462 / JCM 13490 / 255-15).